Here is a 339-residue protein sequence, read N- to C-terminus: RNA 3'-terminal phosphate cyclase (339 aa).

Residues D109 and 286 to 290 (HLADQ) contribute to the ATP site. H310 serves as the catalytic Tele-AMP-histidine intermediate.

Belongs to the RNA 3'-terminal cyclase family. Type 1 subfamily.

It localises to the cytoplasm. The catalysed reaction is a 3'-end 3'-phospho-ribonucleotide-RNA + ATP = a 3'-end 2',3'-cyclophospho-ribonucleotide-RNA + AMP + diphosphate. In terms of biological role, catalyzes the conversion of 3'-phosphate to a 2',3'-cyclic phosphodiester at the end of RNA. The mechanism of action of the enzyme occurs in 3 steps: (A) adenylation of the enzyme by ATP; (B) transfer of adenylate to an RNA-N3'P to produce RNA-N3'PP5'A; (C) and attack of the adjacent 2'-hydroxyl on the 3'-phosphorus in the diester linkage to produce the cyclic end product. The biological role of this enzyme is unknown but it is likely to function in some aspects of cellular RNA processing. This Halobacterium salinarum (strain ATCC 29341 / DSM 671 / R1) protein is RNA 3'-terminal phosphate cyclase.